We begin with the raw amino-acid sequence, 593 residues long: Probable ubiquitin carboxyl-terminal hydrolase 4 (593 aa).

The region spanning 227–573 is the USP domain; it reads IGLTNLGNTC…SSYILFYKRS (347 aa). The Nucleophile role is filled by C236. A phosphoserine mark is found at S338 and S343. H530 acts as the Proton acceptor in catalysis.

It belongs to the peptidase C19 family. In terms of assembly, interacts with sfp47.

It localises to the cytoplasm. Its subcellular location is the endosome. The enzyme catalyses Thiol-dependent hydrolysis of ester, thioester, amide, peptide and isopeptide bonds formed by the C-terminal Gly of ubiquitin (a 76-residue protein attached to proteins as an intracellular targeting signal).. Functionally, has an ATP-independent isopeptidase activity, cleaving at the C-terminus of the ubiquitin moiety. Acts late in the proteolytic pathway in conjunction with the 26S proteasome. Plays a role in avoiding DNA overreplication. This chain is Probable ubiquitin carboxyl-terminal hydrolase 4 (ubp4), found in Schizosaccharomyces pombe (strain 972 / ATCC 24843) (Fission yeast).